The sequence spans 82 residues: Opistoporin-1 (82 aa).

A signal peptide spans methionine 1–glycine 22. Positions glutamate 67–glutamate 82 are excised as a propeptide.

In terms of tissue distribution, expressed by the venom gland.

The protein resides in the secreted. Its subcellular location is the target cell membrane. Its function is as follows. At high concentrations, acts as a pore former in cellular membranes and causes the leakage of the cells. At submicromolar concentrations, degranulates granulocytes and has a weak hemolytic activity against human erythrocytes. Also strongly inhibits the production of superoxide anions. Has a strong antibacterial activity against Gram-negative bacteria but is less active against Gram-positive bacteria. Also has antifungal activity. This Opistophthalmus carinatus (African yellow leg scorpion) protein is Opistoporin-1.